The sequence spans 449 residues: Methionine aminopeptidase 2 (449 aa).

A disordered region spans residues 1–91 (MAAQAAPELA…PRIPLTTLFP (91 aa)). Residues 34–50 (EEAENEGDSEDDRDDEQ) show a composition bias toward acidic residues. Over residues 61 to 75 (KKKKKKRPKKKKKTA) the composition is skewed to basic residues. His199 contacts substrate. 3 residues coordinate a divalent metal cation: Asp219, Asp230, and His299. His307 contacts substrate. A divalent metal cation is bound by residues Glu335 and Glu430.

The protein belongs to the peptidase M24A family. Methionine aminopeptidase eukaryotic type 2 subfamily. It depends on Co(2+) as a cofactor. The cofactor is Zn(2+). Requires Mn(2+) as cofactor. Fe(2+) serves as cofactor.

It localises to the cytoplasm. It catalyses the reaction Release of N-terminal amino acids, preferentially methionine, from peptides and arylamides.. Functionally, cotranslationally removes the N-terminal methionine from nascent proteins. The N-terminal methionine is often cleaved when the second residue in the primary sequence is small and uncharged (Met-Ala-, Cys, Gly, Pro, Ser, Thr, or Val). The sequence is that of Methionine aminopeptidase 2 from Trichophyton verrucosum (strain HKI 0517).